Consider the following 953-residue polypeptide: Zinc finger protein 507 (953 aa).

Residue Ser-95 is modified to Phosphoserine. 3 C2H2-type zinc fingers span residues 125–147 (YQCS…IKQH), 155–185 (LMCS…ANIH), and 248–270 (YRCL…AWKH). Ser-427 bears the Phosphoserine mark. Positions 470–489 (KGLATDENAPPGRRRTNSES) are disordered. C2H2-type zinc fingers lie at residues 641-663 (YRCR…LRVH), 669-691 (YQCP…MIHH), 697-720 (YQCK…REQH), 758-780 (YRCD…RRIH), and 786-808 (YRCS…MWKH). The interval 831-891 (GRVLGKTPGK…KLSPTSNTSY (61 aa)) is disordered. Polar residues predominate over residues 854–891 (TGSSENAVSSSELMSQTPSEVLGTNENEKLSPTSNTSY). A C2H2-type 9 zinc finger spans residues 911–933 (FCCCICGFESTSKENLLDHMKEH).

The protein belongs to the krueppel C2H2-type zinc-finger protein family.

It localises to the nucleus. Functionally, may be involved in transcriptional regulation. The polypeptide is Zinc finger protein 507 (ZNF507) (Pongo abelii (Sumatran orangutan)).